The following is a 407-amino-acid chain: Imidazolonepropionase (407 aa).

2 residues coordinate Fe(3+): His-68 and His-70. Positions 68 and 70 each coordinate Zn(2+). Residues Arg-77, Tyr-140, and His-173 each coordinate 4-imidazolone-5-propanoate. Tyr-140 is an N-formimidoyl-L-glutamate binding site. His-238 is a binding site for Fe(3+). Position 238 (His-238) interacts with Zn(2+). A 4-imidazolone-5-propanoate-binding site is contributed by Gln-241. Asp-313 lines the Fe(3+) pocket. Asp-313 lines the Zn(2+) pocket. N-formimidoyl-L-glutamate contacts are provided by Asn-315 and Gly-317. Position 318 (Thr-318) interacts with 4-imidazolone-5-propanoate.

Belongs to the metallo-dependent hydrolases superfamily. HutI family. The cofactor is Zn(2+). It depends on Fe(3+) as a cofactor.

Its subcellular location is the cytoplasm. It carries out the reaction 4-imidazolone-5-propanoate + H2O = N-formimidoyl-L-glutamate. It functions in the pathway amino-acid degradation; L-histidine degradation into L-glutamate; N-formimidoyl-L-glutamate from L-histidine: step 3/3. Functionally, catalyzes the hydrolytic cleavage of the carbon-nitrogen bond in imidazolone-5-propanoate to yield N-formimidoyl-L-glutamate. It is the third step in the universal histidine degradation pathway. The chain is Imidazolonepropionase from Burkholderia cenocepacia (strain ATCC BAA-245 / DSM 16553 / LMG 16656 / NCTC 13227 / J2315 / CF5610) (Burkholderia cepacia (strain J2315)).